The sequence spans 858 residues: Heat shock protein 105 kDa (858 aa).

S2 is subject to N-acetylserine. At K471 the chain carries N6-acetyllysine. 2 disordered regions span residues 500 to 585 (KVPT…PPEA) and 801 to 858 (VTQP…MDLD). Residues 504-515 (EEEDGSSLEADM) are compositionally biased toward acidic residues. 2 positions are modified to phosphoserine: S509 and S510. Polar residues predominate over residues 533 to 549 (QQDNSEAGTQPQVQTDG). S558 is modified (phosphoserine). T562 is modified (phosphothreonine). Composition is skewed to basic and acidic residues over residues 564-585 (EESKTPDADKANEKKVDQPPEA) and 806-815 (PKIESPKLER). Phosphoserine is present on S810. Residue T816 is modified to Phosphothreonine.

It belongs to the heat shock protein 70 family. In terms of assembly, interacts with HSPA8/HSC70. Interacts with HSPA1A (via NBD) and HSPA1B (via NBD). In terms of processing, phosphorylation on Ser-509 may be important for regulation of the HSPA8/HSC70 chaperone activity. In terms of tissue distribution, expressed in neurons in the cerebrum and Purkinje cells in the cerebellum (at protein level). Expressed in testis and no expression or only low-level expression in liver, spleen, lung, and kidney (at protein level). Highly expressed in the brain and moderately expressed in lung, heart, thymus, spleen, liver, and small intestine.

It is found in the cytoplasm. Its subcellular location is the nucleus. Functionally, acts as a nucleotide-exchange factor (NEF) for chaperone proteins HSPA1A and HSPA1B, promoting the release of ADP from HSPA1A/B thereby triggering client/substrate protein release. Prevents the aggregation of denatured proteins in cells under severe stress, on which the ATP levels decrease markedly. Inhibits HSPA8/HSC70 ATPase and chaperone activities. The protein is Heat shock protein 105 kDa (Hsph1) of Mus musculus (Mouse).